The following is a 459-amino-acid chain: Cysteine--tRNA ligase (459 aa).

A Zn(2+)-binding site is contributed by Cys28. The 'HIGH' region motif lies at 30–40 (VTVYDLCHFGH). Zn(2+)-binding residues include Cys209, His234, and Glu238. The 'KMSKS' region signature appears at 266 to 270 (KMSKS). Lys269 serves as a coordination point for ATP.

This sequence belongs to the class-I aminoacyl-tRNA synthetase family. As to quaternary structure, monomer. Requires Zn(2+) as cofactor.

The protein resides in the cytoplasm. It carries out the reaction tRNA(Cys) + L-cysteine + ATP = L-cysteinyl-tRNA(Cys) + AMP + diphosphate. The sequence is that of Cysteine--tRNA ligase from Actinobacillus pleuropneumoniae serotype 5b (strain L20).